Reading from the N-terminus, the 252-residue chain is Imidazole glycerol phosphate synthase subunit HisF (252 aa).

Residues Asp-11 and Asp-130 contribute to the active site.

The protein belongs to the HisA/HisF family. In terms of assembly, heterodimer of HisH and HisF.

Its subcellular location is the cytoplasm. The catalysed reaction is 5-[(5-phospho-1-deoxy-D-ribulos-1-ylimino)methylamino]-1-(5-phospho-beta-D-ribosyl)imidazole-4-carboxamide + L-glutamine = D-erythro-1-(imidazol-4-yl)glycerol 3-phosphate + 5-amino-1-(5-phospho-beta-D-ribosyl)imidazole-4-carboxamide + L-glutamate + H(+). Its pathway is amino-acid biosynthesis; L-histidine biosynthesis; L-histidine from 5-phospho-alpha-D-ribose 1-diphosphate: step 5/9. In terms of biological role, IGPS catalyzes the conversion of PRFAR and glutamine to IGP, AICAR and glutamate. The HisF subunit catalyzes the cyclization activity that produces IGP and AICAR from PRFAR using the ammonia provided by the HisH subunit. This Syntrophomonas wolfei subsp. wolfei (strain DSM 2245B / Goettingen) protein is Imidazole glycerol phosphate synthase subunit HisF.